Here is a 1411-residue protein sequence, read N- to C-terminus: Zinc finger protein 609 (1411 aa).

Disordered regions lie at residues 1–26 (MSLSSGASGGKGVDANPVETYDSGDE), 47–190 (QKLE…QPVP), 353–484 (PRFC…EPTV), 517–659 (AHAH…ARPI), 679–963 (ASPG…VIQQ), 1005–1125 (YEEQ…RQAE), 1153–1221 (KSED…LTQH), and 1270–1367 (GSKV…STHH). Residues serine 358, serine 361, and serine 379 each carry the phosphoserine modification. Polar residues predominate over residues 377 to 401 (PNSNTPVNETATASDSKGTSNSSKT). At threonine 381 the chain carries Phosphothreonine. Serine 413, serine 433, serine 446, serine 452, serine 467, and serine 470 each carry phosphoserine. The span at 423-437 (ASSTSEDVKASPSSA) shows a compositional bias: polar residues. Lysine 479 participates in a covalent cross-link: Glycyl lysine isopeptide (Lys-Gly) (interchain with G-Cter in SUMO2). The C2H2-type zinc finger occupies 495–520 (IDCPHPNCNKKYKHINGLKYHQAHAH). Residues 519–529 (AHTDDDSKPEA) show a composition bias toward basic and acidic residues. Phosphoserine is present on serine 533. Positions 549–563 (NGASVSQKGSLSPAR) are enriched in polar residues. A phosphoserine mark is found at serine 576 and serine 578. The segment covering 626–649 (SLERKCMEKEKCKKPSSLKPEKIP) has biased composition (basic and acidic residues). The span at 679–700 (ASPGSSSGLTATVAQAMPNSPQ) shows a compositional bias: polar residues. A compositionally biased stretch (basic residues) spans 726–736 (DKKKKDKKKKE). Phosphoserine is present on serine 743. The residue at position 746 (threonine 746) is a Phosphothreonine. Positions 751-764 (CRAEEGKSPFRESS) are enriched in basic and acidic residues. Position 758 is a phosphoserine (serine 758). A Glycyl lysine isopeptide (Lys-Gly) (interchain with G-Cter in SUMO2) cross-link involves residue lysine 789. A compositionally biased stretch (polar residues) spans 798 to 844 (FTDNAPSPSIGGSSRLENTTPTQPLTPLHVVTQNGAEASSVKTNSPA). At serine 804 the chain carries Phosphoserine. A Phosphothreonine modification is found at threonine 823. 3 positions are modified to phosphoserine: serine 842, serine 846, and serine 849. The span at 855 to 876 (GEGKVDSVKSKDAEQLVKEGAK) shows a compositional bias: basic and acidic residues. The segment covering 897-908 (SYYSPSYAQSSP) has biased composition (low complexity). A compositionally biased stretch (basic and acidic residues) spans 926–950 (TKRDEEPESIEGKVKNDICEEKKPE). Residues 952–963 (SSSSQQPSVIQQ) show a composition bias toward low complexity. Positions 1020-1042 (GVDKKAEMGLKEREAALKEEWKQ) are enriched in basic and acidic residues. Serine 1055 carries the post-translational modification Phosphoserine. Lysine 1061 is covalently cross-linked (Glycyl lysine isopeptide (Lys-Gly) (interchain with G-Cter in SUMO2)). Basic and acidic residues-rich tracts occupy residues 1097-1113 (LKVKLSDASHLSKEASE), 1153-1187 (KSEDERWKEERDRKLKEERSRSKDSVPKEDGKEST), and 1195-1208 (TSEESRLGSKEPRP). Lysine 1153 is covalently cross-linked (Glycyl lysine isopeptide (Lys-Gly) (interchain with G-Cter in SUMO2)). Positions 1286–1296 (PSVTCKSSSES) are enriched in polar residues. Lysine 1297 participates in a covalent cross-link: Glycyl lysine isopeptide (Lys-Gly) (interchain with G-Cter in SUMO2). The span at 1328–1337 (GCGVVGGGGS) shows a compositional bias: gly residues.

In terms of assembly, interacts (via N-terminus) with NIPBL. Interacts with INTS13; promoting association with the integrator complex. Isoform 1: Expressed in myoblasts and myotubes. Isoform 2: Expressed in myoblasts and myotubes, with a preference in undifferentiated myoblasts.

It is found in the nucleus. In terms of biological role, transcription factor, which activates RAG1, and possibly RAG2, transcription. Through the regulation of RAG1/2 expression, may regulate thymocyte maturation. Along with NIPBL and the multiprotein complex Integrator, promotes cortical neuron migration during brain development by regulating the transcription of crucial genes in this process. Preferentially binds promoters containing paused RNA polymerase II. Up-regulates the expression of SEMA3A, NRP1, PLXND1 and GABBR2 genes, among others. Functionally, involved in the regulation of myoblast proliferation during myogenesis. This Homo sapiens (Human) protein is Zinc finger protein 609.